The sequence spans 68 residues: Metallothionein (68 aa).

A divalent metal cation contacts are provided by Cys7, Cys9, Cys14, Cys16, Cys20, Cys22, Cys25, Cys27, Cys35, Cys39, Cys40, Cys42, Cys43, Cys47, Cys50, Cys54, Cys56, Cys64, Cys66, and Cys67.

This sequence belongs to the metallothionein superfamily. Type 1 family.

In terms of biological role, metallothioneins have a high content of cysteine residues that bind various heavy metals. This is Metallothionein (mt) from Scyliorhinus torazame (Cloudy catshark).